The primary structure comprises 215 residues: Adenylate kinase (215 aa).

10–15 (GAGKGT) is an ATP binding site. Residues 30–59 (STGDMLRAAVKAGTELGLKAKSVMDAGGLV) form an NMP region. Residues threonine 31, arginine 36, 57–59 (GLV), 85–88 (GFPR), and glutamine 92 each bind AMP. The segment at 122–159 (GRRVHPASGRVYHTEYNPPKVAGKDDVSGEELVQREDD) is LID. ATP-binding positions include arginine 123 and 132–133 (VY). AMP-binding residues include arginine 156 and arginine 167. Glycine 201 contacts ATP.

It belongs to the adenylate kinase family. In terms of assembly, monomer.

It is found in the cytoplasm. The enzyme catalyses AMP + ATP = 2 ADP. It participates in purine metabolism; AMP biosynthesis via salvage pathway; AMP from ADP: step 1/1. Catalyzes the reversible transfer of the terminal phosphate group between ATP and AMP. Plays an important role in cellular energy homeostasis and in adenine nucleotide metabolism. The sequence is that of Adenylate kinase from Ectopseudomonas mendocina (strain ymp) (Pseudomonas mendocina).